The primary structure comprises 202 residues: 3-isopropylmalate dehydratase small subunit (202 aa).

The protein belongs to the LeuD family. LeuD type 1 subfamily. In terms of assembly, heterodimer of LeuC and LeuD.

It catalyses the reaction (2R,3S)-3-isopropylmalate = (2S)-2-isopropylmalate. Its pathway is amino-acid biosynthesis; L-leucine biosynthesis; L-leucine from 3-methyl-2-oxobutanoate: step 2/4. Functionally, catalyzes the isomerization between 2-isopropylmalate and 3-isopropylmalate, via the formation of 2-isopropylmaleate. This is 3-isopropylmalate dehydratase small subunit from Rhizobium etli (strain ATCC 51251 / DSM 11541 / JCM 21823 / NBRC 15573 / CFN 42).